A 257-amino-acid polypeptide reads, in one-letter code: ATP synthase subunit a (257 aa).

A propeptide spans 1 to 8 (removed in mature form); the sequence is MRHLDFVL. Helical transmembrane passes span 34 to 54, 93 to 113, 122 to 142, 149 to 169, 187 to 207, 210 to 230, and 231 to 251; these read LTNIGLYLTISIFLILTYSLL, FFPLMYVLFIFILVNNLIGLV, HFILTFSISFTVVLGATILGF, FFSLFVPSGCPLALLPLLVLI, ANILSGHMLLSILSGFTYNIM, GIIFFILGLIPLAFIIAFSGL, and ELAIAFIQAQVFVVLACSYIK.

This sequence belongs to the ATPase A chain family. In terms of assembly, F-type ATPases have 2 components, CF(1) - the catalytic core - and CF(0) - the membrane proton channel. CF(1) has five subunits: alpha(3), beta(3), gamma(1), delta(1), epsilon(1). CF(0) has three main subunits: a, b and c.

It localises to the mitochondrion inner membrane. Functionally, mitochondrial membrane ATP synthase (F(1)F(0) ATP synthase or Complex V) produces ATP from ADP in the presence of a proton gradient across the membrane which is generated by electron transport complexes of the respiratory chain. F-type ATPases consist of two structural domains, F(1) - containing the extramembraneous catalytic core and F(0) - containing the membrane proton channel, linked together by a central stalk and a peripheral stalk. During catalysis, ATP synthesis in the catalytic domain of F(1) is coupled via a rotary mechanism of the central stalk subunits to proton translocation. Key component of the proton channel; it may play a direct role in the translocation of protons across the membrane. The chain is ATP synthase subunit a (atp6) from Penicillium chrysogenum (Penicillium notatum).